The primary structure comprises 143 residues: Phosphoribosyl-AMP cyclohydrolase (143 aa).

Residue D86 participates in Mg(2+) binding. A Zn(2+)-binding site is contributed by C87. Residues D88 and D90 each coordinate Mg(2+). Positions 103 and 110 each coordinate Zn(2+).

This sequence belongs to the PRA-CH family. Homodimer. The cofactor is Mg(2+). Zn(2+) serves as cofactor.

Its subcellular location is the cytoplasm. The catalysed reaction is 1-(5-phospho-beta-D-ribosyl)-5'-AMP + H2O = 1-(5-phospho-beta-D-ribosyl)-5-[(5-phospho-beta-D-ribosylamino)methylideneamino]imidazole-4-carboxamide. It participates in amino-acid biosynthesis; L-histidine biosynthesis; L-histidine from 5-phospho-alpha-D-ribose 1-diphosphate: step 3/9. Its function is as follows. Catalyzes the hydrolysis of the adenine ring of phosphoribosyl-AMP. The polypeptide is Phosphoribosyl-AMP cyclohydrolase (Rhodospirillum rubrum (strain ATCC 11170 / ATH 1.1.1 / DSM 467 / LMG 4362 / NCIMB 8255 / S1)).